Here is a 412-residue protein sequence, read N- to C-terminus: FAD-dependent monooxygenase nscC (412 aa).

The first 21 residues, 1–21 (MAKPQATVLIIGAGISGLTTS), serve as a signal peptide directing secretion. Glu35 and Ala46 together coordinate FAD. Asn92 carries an N-linked (GlcNAc...) asparagine glycan. Arg119 contributes to the FAD binding site. Residues Asn170 and Asn231 are each glycosylated (N-linked (GlcNAc...) asparagine). 2 residues coordinate FAD: Asp326 and Gly339.

Belongs to the paxM FAD-dependent monooxygenase family. Requires FAD as cofactor.

Its pathway is secondary metabolite biosynthesis. In terms of biological role, FAD-dependent monooxygenase; part of the gene cluster that mediates the biosynthesis of neosartoricin B, a prenylated anthracenone that probably exhibits T-cell antiproliferative activity, suggestive of a physiological role as an immunosuppressive agent. The non-reducing polyketide synthase nscA probably synthesizes and cyclizes the decaketide backbone. The hydrolase nscB then mediates the product release through hydrolysis followed by spontaneous decarboxylation. The prenyltransferase nscD catalyzes the addition of the dimethylallyl group to the aromatic C5. The FAD-dependent monooxygenase nscC is then responsible for the stereospecific hydroxylation at C2. Neosartoricin B can be converted into two additional compounds neosartoricins C and D. Neosartoricin C is a spirocyclic compound that is cyclized through the attack of C3 hydroxyl on C14, followed by dehydration. On the other hand, neosartoricin D is a further cyclized compound in which attack of C2 on C14 in neosartoricin C results in the formation of the acetal-containing dioxabicyclo-octanone ring. Both of these compounds are novel and possibly represent related metabolites of the gene cluster. The polypeptide is FAD-dependent monooxygenase nscC (Arthroderma otae (strain ATCC MYA-4605 / CBS 113480) (Microsporum canis)).